The chain runs to 278 residues: Small ribosomal subunit biogenesis GTPase RsgA (278 aa).

The CP-type G domain occupies 62–218 (KNTLVRPKVV…ICDTPGFNVI (157 aa)). Residues 112–115 (TKND) and 162–170 (GQSGVGKSS) each bind GTP. Zn(2+) is bound by residues Cys-241, Cys-246, His-248, and Cys-254.

The protein belongs to the TRAFAC class YlqF/YawG GTPase family. RsgA subfamily. Monomer. Associates with 30S ribosomal subunit, binds 16S rRNA. It depends on Zn(2+) as a cofactor.

Its subcellular location is the cytoplasm. Functionally, one of several proteins that assist in the late maturation steps of the functional core of the 30S ribosomal subunit. Helps release RbfA from mature subunits. May play a role in the assembly of ribosomal proteins into the subunit. Circularly permuted GTPase that catalyzes slow GTP hydrolysis, GTPase activity is stimulated by the 30S ribosomal subunit. The protein is Small ribosomal subunit biogenesis GTPase RsgA of Mycoplasma pneumoniae (strain ATCC 29342 / M129 / Subtype 1) (Mycoplasmoides pneumoniae).